The primary structure comprises 601 residues: Probable HECT-type ubiquitin ligase-interacting protein creD (601 aa).

Disordered stretches follow at residues 374–397 and 454–496; these read EVDPSGYRTPGPGSGPGTPFGTLS and VSTD…GMAT. Low complexity predominate over residues 455 to 473; that stretch reads STDSFGPSSGSNSQSPASP. Basic and acidic residues predominate over residues 475-489; it reads LSRRPSDEGYHDHDY.

Belongs to the arrestin family. Interacts with hulA.

Functionally, component of the regulatory network controlling carbon source utilization through ubiquitination and deubiquitination involving creA, creB, creC, creD and acrB. May be involved in signaling by recognizing appropriately phosphorylated substrates via its arrestin domains and then recruit a HECT-type ubiquitin ligase such as hulA, leading to ubiquitination of the substrate, providing a link between ubiquitination and phosphorylation in protein regulation and stability. The chain is Probable HECT-type ubiquitin ligase-interacting protein creD (creD) from Aspergillus fumigatus (strain CBS 144.89 / FGSC A1163 / CEA10) (Neosartorya fumigata).